A 128-amino-acid polypeptide reads, in one-letter code: Protein BEX1 (128 aa).

A disordered region spans residues 1–37 (MESKEKRAVNNLSMENTNQENEEKEEKEQVANKGEPL). Ser-105 is modified (phosphoserine). The disordered stretch occupies residues 107–128 (SLRAVSTDPPHHDHHDEFCLMP). Basic and acidic residues predominate over residues 115–128 (PPHHDHHDEFCLMP). Positions 117–121 (HHDHH) are his cluster. Cys-125 contacts Zn(2+).

The protein belongs to the BEX family. In terms of assembly, interacts with neurotrophin receptor p75NTR/NGFR. Interacts with OMP. Post-translationally, phosphorylated. Phosphorylation of Ser-105 protects it from the proteasome. Ubiquitinated. Degraded by the proteasome.

The protein resides in the nucleus. The protein localises to the cytoplasm. In terms of biological role, signaling adapter molecule involved in p75NTR/NGFR signaling. Plays a role in cell cycle progression and neuronal differentiation. Inhibits neuronal differentiation in response to nerve growth factor (NGF). May act as a link between the cell cycle and neurotrophic factor signaling, possibly by functioning as an upstream modulator of receptor signaling, coordinating biological responses to external signals with internal cellular states. In absence of reductive stress, acts as a pseudosubstrate for the CRL2(FEM1B) complex: associates with FEM1B via zinc, thereby preventing association between FEM1B and its substrates. The polypeptide is Protein BEX1 (BEX1) (Macaca fascicularis (Crab-eating macaque)).